The chain runs to 550 residues: MTPADLADLLRTTATAVLTERDLDTAALPATVTVERPRNPEHGDYATNLALQVGKKVGVNPRELAGWLAEALTATAGIASAEVAGPGFVNLRIEAAAQNVIVGDIITSAERYGHSAALAERNINLEFVSANPTGPIHIGGTRWAAVGDALGRLLATQGAAVVREYYFNDHGAQIDRFVSSLIAAAKGEPTPEDGYAGSYIGDIAAQVLAKDPGALELPDDEMRETFRAIGVDLMFDHIKISLHDFGTDFDVFTHEDSMHTSGRVEEAIARLRENGAIYEKDGATWLRTTDFGDDKDRVVIKSDGAPAYIAGDLAYFLDKRQRGFDLCIYMLGADHHGYIARLKAAAAALGDDPDTVEVMIGQMVNLVRDGQPVRMSKRAGTVITLDDLVEAIGVDAARYSLIRSSVDTPIDIDLALWSSASNENPVYYVQYAHARLSALARNAADLGVVADTAHLDLLTHDKEGTLIRNLGEFPRVLESAAALREPHRVCRYLEDLAGDYHRFYDSCRVLPQGDEAPGSLHQARLALCQATRQVIANGLAILGVSAPERM.

The short motif at 130-140 (ANPTGPIHIGG) is the 'HIGH' region element.

The protein belongs to the class-I aminoacyl-tRNA synthetase family. As to quaternary structure, monomer.

It is found in the cytoplasm. The enzyme catalyses tRNA(Arg) + L-arginine + ATP = L-arginyl-tRNA(Arg) + AMP + diphosphate. This is Arginine--tRNA ligase from Mycobacterium sp. (strain KMS).